The primary structure comprises 408 residues: MSFDRQLTEDQEVVLKQIWTHLFHLWQVPVDGTHIFPNNSLHSSSTPAKKKKSSWFSKLQSSDHTQDSSEAAEAAHLYEKGKIHKALANLDPQTTKKQFWHDIKNETPDATILKFIRARKWNADKTIAMLGHDLYWRKDTINKIINGGERAVYENNETGVIKNLELQKATIQGYDNDMRPVILVRPRLHHSSDQTEQELEKFSLLVIEQSKLFFKENYPASTTILFDLNGFSMSNMDYAPVKFLITCFEAHYPESLGHLLIHKAPWIFNPIWNIIKNWLDPVVASKIVFTKNIDELHKFIQPQYIPRYLGGENDNDLDHYTPPDGSLDVHLKDTETRAMIEKEREELVEQFLTVTAQWIEHQPLNDPAYIQLQEKRVQLSTALCENYSKLDPYIRSRSVYDYNGSLKV.

Serine 2 is modified (N-acetylserine). The residue at position 2 (serine 2) is a Phosphoserine. The 161-residue stretch at 157–317 folds into the CRAL-TRIO domain; sequence ETGVIKNLEL…YLGGENDNDL (161 aa).

It belongs to the PITP family. As to quaternary structure, forms a complex with 2 TSA2 subunits. Binds phosphatidylinositol (PtdIns).

It localises to the cytoplasm. The protein resides in the microsome. Its subcellular location is the endosome. It carries out the reaction a 1,2-diacyl-sn-glycero-3-phospho-(1D-myo-inositol)(in) = a 1,2-diacyl-sn-glycero-3-phospho-(1D-myo-inositol)(out). Functionally, non-classical phosphatidylinositol (PtdIns) transfer protein (PITP), which exhibits PtdIns-binding/transfer activity in the absence of detectable PtdCho-binding/transfer activity. Activates SPO14/PLD1 (phospholipase D1) by stimulating phosphoinositide synthesis via the STT4 PtdIns 4-kinase. Modulates ArfGAP function through effects on SPO14 activity. Inhibits phosphatidylcholine degradation by PLB1 (phospholipase B1). May also regulate post-Golgi membrane-trafficking events and have a role resistance to oxidative stress. Inhibits fatty acid synthase activity in response to heme depletion and oleic acid starvation, preventing saturated fatty acid (SFA) accumulation. This Saccharomyces cerevisiae (strain ATCC 204508 / S288c) (Baker's yeast) protein is Phosphatidylinositol transfer protein CSR1 (CSR1).